Consider the following 438-residue polypeptide: Trigger factor (438 aa).

The PPIase FKBP-type domain occupies serine 160–glutamine 231. Positions alanine 407–glutamate 438 are disordered. Residues alanine 418–glutamate 427 are compositionally biased toward low complexity.

Belongs to the FKBP-type PPIase family. Tig subfamily.

Its subcellular location is the cytoplasm. The catalysed reaction is [protein]-peptidylproline (omega=180) = [protein]-peptidylproline (omega=0). Involved in protein export. Acts as a chaperone by maintaining the newly synthesized protein in an open conformation. Functions as a peptidyl-prolyl cis-trans isomerase. This chain is Trigger factor, found in Deinococcus deserti (strain DSM 17065 / CIP 109153 / LMG 22923 / VCD115).